A 237-amino-acid chain; its full sequence is Riboflavin kinase (237 aa).

The interval 1 to 23 (MSLPNPDNRPLLIGPPTGPEAPF) is disordered. Mg(2+) is bound by residues threonine 46 and asparagine 48. The tract at residues 82 to 126 (VLYQKPPTSEPVMMDPVQQQQQQQQQQRNQQQQQEGGVGSAQQEK) is disordered. The span at 99–115 (QQQQQQQQQQRNQQQQQ) shows a compositional bias: low complexity. Glutamate 158 functions as the Nucleophile in the catalytic mechanism.

This sequence belongs to the flavokinase family. It depends on Zn(2+) as a cofactor. The cofactor is Mg(2+).

It carries out the reaction riboflavin + ATP = FMN + ADP + H(+). The protein operates within cofactor biosynthesis; FMN biosynthesis; FMN from riboflavin (ATP route): step 1/1. Its function is as follows. Catalyzes the phosphorylation of riboflavin (vitamin B2) to form flavin mononucleotide (FMN) coenzyme. The sequence is that of Riboflavin kinase (fmn1) from Neurospora crassa (strain ATCC 24698 / 74-OR23-1A / CBS 708.71 / DSM 1257 / FGSC 987).